The primary structure comprises 591 residues: Probable indole-3-acetic acid-amido synthetase GH3.11 (591 aa).

It belongs to the IAA-amido conjugating enzyme family. Expressed in etiolated and green seedlings, roots, callus and highly in flowers.

In terms of biological role, may catalyze the synthesis of indole-3-acetic acid (IAA)-amino acid conjugates, providing a mechanism for the plant to cope with the presence of excess auxin. The protein is Probable indole-3-acetic acid-amido synthetase GH3.11 (GH3.11) of Oryza sativa subsp. japonica (Rice).